The sequence spans 482 residues: Protein nucleotidyltransferase YdiU (482 aa).

8 residues coordinate ATP: Gly-88, Gly-90, Arg-91, Lys-111, Asp-123, Gly-124, Arg-174, and Arg-181. Residue Asp-250 is the Proton acceptor of the active site. Mg(2+) contacts are provided by Asn-251 and Asp-260. Residue Asp-260 coordinates ATP.

The protein belongs to the SELO family. It depends on Mg(2+) as a cofactor. The cofactor is Mn(2+).

The enzyme catalyses L-seryl-[protein] + ATP = 3-O-(5'-adenylyl)-L-seryl-[protein] + diphosphate. The catalysed reaction is L-threonyl-[protein] + ATP = 3-O-(5'-adenylyl)-L-threonyl-[protein] + diphosphate. It catalyses the reaction L-tyrosyl-[protein] + ATP = O-(5'-adenylyl)-L-tyrosyl-[protein] + diphosphate. It carries out the reaction L-histidyl-[protein] + UTP = N(tele)-(5'-uridylyl)-L-histidyl-[protein] + diphosphate. The enzyme catalyses L-seryl-[protein] + UTP = O-(5'-uridylyl)-L-seryl-[protein] + diphosphate. The catalysed reaction is L-tyrosyl-[protein] + UTP = O-(5'-uridylyl)-L-tyrosyl-[protein] + diphosphate. Functionally, nucleotidyltransferase involved in the post-translational modification of proteins. It can catalyze the addition of adenosine monophosphate (AMP) or uridine monophosphate (UMP) to a protein, resulting in modifications known as AMPylation and UMPylation. This chain is Protein nucleotidyltransferase YdiU, found in Cronobacter sakazakii (strain ATCC BAA-894) (Enterobacter sakazakii).